We begin with the raw amino-acid sequence, 276 residues long: S-adenosylmethionine-dependent nucleotide dehydratase (276 aa).

In terms of domain architecture, Radical SAM core spans 6 to 216 (TSVRKFRSAN…RRRHEDIGCI (211 aa)). C22, C26, and C29 together coordinate [4Fe-4S] cluster.

Belongs to the radical SAM superfamily. Viperin family. [4Fe-4S] cluster serves as cofactor.

It carries out the reaction CTP + AH2 + S-adenosyl-L-methionine = 3'-deoxy-3',4'-didehydro-CTP + 5'-deoxyadenosine + L-methionine + A + H2O + H(+). Expression of pVip50 in E.coli (strain MG1655) confers resistance to phage P1; has no effect against T7. Catalyzes the conversion of cytosine triphosphate (CTP) to 3'-deoxy-3',4'-didehydro-CTP (ddhCTP), probably via a SAM-dependent radical mechanism. The modified nucleotide represses transcription from T7 RNA polymerase-directed genes (possibly by acting as chain terminators), strongly suggesting these nucleotides block viral polymerase transcription. How this protein allows bacteria to resist viruses that do not encode their own RNA polymerase (such as lambda, P1) is unknown. In Thermoplasmatales archaeon (strain ISO4-H5), this protein is S-adenosylmethionine-dependent nucleotide dehydratase.